We begin with the raw amino-acid sequence, 218 residues long: Capsid protein (218 aa).

Methionine 1 is modified (N-acetylmethionine; by host). Residues 1 to 10 are compositionally biased toward low complexity; it reads MDKSESTSAG. Residues 1–29 form a disordered region; it reads MDKSESTSAGRNRRRRLRRGSRSAPSSAD. Positions 11 to 21 are enriched in basic residues; that stretch reads RNRRRRLRRGS.

The protein belongs to the cucumovirus capsid protein family.

The protein localises to the virion. Functionally, capsid protein. Probably binds RNA and plays a role in packaging. The polypeptide is Capsid protein (Cucumis sativus (Cucumber)).